An 81-amino-acid polypeptide reads, in one-letter code: Large ribosomal subunit protein uL23 (81 aa).

The protein belongs to the universal ribosomal protein uL23 family. Part of the 50S ribosomal subunit. Contacts protein L29.

Functionally, binds to 23S rRNA. One of the proteins that surrounds the polypeptide exit tunnel on the outside of the ribosome. This is Large ribosomal subunit protein uL23 from Saccharolobus solfataricus (strain ATCC 35092 / DSM 1617 / JCM 11322 / P2) (Sulfolobus solfataricus).